The chain runs to 276 residues: Homeobox-leucine zipper protein HOX22 (276 aa).

A DNA-binding region (homeobox) is located at residues 70–130; sequence AGERKRRFTE…NKRARWRSKQ (61 aa). The interval 129–173 is leucine-zipper; it reads KQLEHDYAALRSKYDALHSRVESLKQEKLALTVQLHELRERLRER. The segment at 170 to 212 is disordered; it reads LREREERSGNGGAATTAASSSSCNGSGSEEVDDDDDKRNAAAG. Positions 182–197 are enriched in low complexity; sequence AATTAASSSSCNGSGS.

Belongs to the HD-ZIP homeobox family. Class I subfamily. Expressed in seedlings, roots, stems, leaf sheaths and blades and panicles.

The protein localises to the nucleus. Probable transcription factor. In Oryza sativa subsp. japonica (Rice), this protein is Homeobox-leucine zipper protein HOX22 (HOX22).